Reading from the N-terminus, the 190-residue chain is R46 site-specific recombinase (190 aa).

The 136-residue stretch at 2–137 folds into the Resolvase/invertase-type recombinase catalytic domain; the sequence is RLFGYARVST…EGRQEAKLKG (136 aa). Serine 10 serves as the catalytic O-(5'-phospho-DNA)-serine intermediate. Residues 161-180 constitute a DNA-binding region (H-T-H motif); the sequence is ATDIARRLSIARSTVYKILE.

This sequence belongs to the site-specific recombinase resolvase family.

Its function is as follows. Site-specific recombination protein. The sequence is that of R46 site-specific recombinase (tnpR) from Escherichia coli.